The chain runs to 333 residues: Adenosine deaminase (333 aa).

Residues histidine 12 and histidine 14 each contribute to the Zn(2+) site. 3 residues coordinate substrate: histidine 14, aspartate 16, and glycine 170. Residue histidine 197 coordinates Zn(2+). Glutamate 200 (proton donor) is an active-site residue. Aspartate 278 contacts Zn(2+). Residue aspartate 279 participates in substrate binding.

This sequence belongs to the metallo-dependent hydrolases superfamily. Adenosine and AMP deaminases family. Adenosine deaminase subfamily. Zn(2+) is required as a cofactor.

The catalysed reaction is adenosine + H2O + H(+) = inosine + NH4(+). The enzyme catalyses 2'-deoxyadenosine + H2O + H(+) = 2'-deoxyinosine + NH4(+). Its function is as follows. Catalyzes the hydrolytic deamination of adenosine and 2-deoxyadenosine. The chain is Adenosine deaminase from Shigella dysenteriae serotype 1 (strain Sd197).